The chain runs to 297 residues: tRNA pseudouridine synthase B (297 aa).

Residue Asp-44 is the Nucleophile of the active site.

The protein belongs to the pseudouridine synthase TruB family. Type 1 subfamily.

The enzyme catalyses uridine(55) in tRNA = pseudouridine(55) in tRNA. Responsible for synthesis of pseudouridine from uracil-55 in the psi GC loop of transfer RNAs. The protein is tRNA pseudouridine synthase B of Corynebacterium aurimucosum (strain ATCC 700975 / DSM 44827 / CIP 107346 / CN-1) (Corynebacterium nigricans).